The sequence spans 221 residues: Casparian strip membrane protein 2 (221 aa).

The tract at residues 1–21 is disordered; the sequence is MEKSEATTIEIGETSRESKGK. The Cytoplasmic portion of the chain corresponds to 1–41; it reads MEKSEATTIEIGETSRESKGKTPLLAEVEQTARTAGSYRRG. The helical transmembrane segment at 42-62 threads the bilayer; the sequence is VAIFDLILRVSAATSALAATI. Residues 63-89 are Extracellular-facing; sequence TMGTTEQTLPFFTQFFQFQASYDDLPA. Residues 90-110 form a helical membrane-spanning segment; the sequence is FTFFVIALSIVTGYLVLSVPF. The Cytoplasmic portion of the chain corresponds to 111–131; it reads SVVCIAQPLAAVPRLLLIVCD. The chain crosses the membrane as a helical span at residues 132–152; sequence TLTVTLATAAASSSAAIVYLA. Residues 153–221 lie on the Extracellular side of the membrane; it reads HNGNADANWL…HYWDRRWCEI (69 aa).

Belongs to the Casparian strip membrane proteins (CASP) family. In terms of assembly, homodimer and heterodimers.

It localises to the cell membrane. Functionally, regulates membrane-cell wall junctions and localized cell wall deposition. Required for establishment of the Casparian strip membrane domain (CSD) and the subsequent formation of Casparian strips, a cell wall modification of the root endodermis that determines an apoplastic barrier between the intraorganismal apoplasm and the extraorganismal apoplasm and prevents lateral diffusion. This chain is Casparian strip membrane protein 2, found in Erythranthe guttata (Yellow monkey flower).